Reading from the N-terminus, the 159-residue chain is Ribosomal RNA large subunit methyltransferase H (159 aa).

Residues Leu-76, Gly-108, and Phe-127–Phe-132 each bind S-adenosyl-L-methionine.

This sequence belongs to the RNA methyltransferase RlmH family. In terms of assembly, homodimer.

Its subcellular location is the cytoplasm. The enzyme catalyses pseudouridine(1915) in 23S rRNA + S-adenosyl-L-methionine = N(3)-methylpseudouridine(1915) in 23S rRNA + S-adenosyl-L-homocysteine + H(+). Its function is as follows. Specifically methylates the pseudouridine at position 1915 (m3Psi1915) in 23S rRNA. This chain is Ribosomal RNA large subunit methyltransferase H, found in Bifidobacterium longum subsp. infantis (strain ATCC 15697 / DSM 20088 / JCM 1222 / NCTC 11817 / S12).